We begin with the raw amino-acid sequence, 188 residues long: MTDTLFGFNKSNVVLAAGVAGAAFLGYCIYFDHKRINAPDYKDKIRQKRRAQAGSGGMAARRPPAGGNEMAPDVTDPSQMQRFFLQEVQLGEELMAAGNVEEGAVHIANAVMLCGESQQLLSIFQQTLSEEQFRAVVQQLPSTRERLADMFGARADEAENEPPLVQYLGDGPPPAQIQELIDDTDDLE.

Residues 1–12 are Mitochondrial intermembrane-facing; sequence MTDTLFGFNKSN. A helical transmembrane segment spans residues 13 to 31; that stretch reads VVLAAGVAGAAFLGYCIYF. The Cytoplasmic portion of the chain corresponds to 32–188; sequence DHKRINAPDY…ELIDDTDDLE (157 aa). Disordered regions lie at residues 48–67 and 155–188; these read KRRAQAGSGGMAARRPPAGG and ADEAENEPPLVQYLGDGPPPAQIQELIDDTDDLE. The segment covering 58–67 has biased composition (low complexity); it reads MAARRPPAGG.

It belongs to the Tom20 family. Forms part of the preprotein translocase complex of the outer mitochondrial membrane (TOM complex).

Its subcellular location is the mitochondrion outer membrane. Functionally, central component of the receptor complex responsible for the recognition and translocation of cytosolically synthesized mitochondrial preproteins. Together with TOM22 functions as the transit peptide receptor at the surface of the mitochondrion outer membrane and facilitates the movement of preproteins into the translocation pore. This chain is Mitochondrial import receptor subunit TOM20 homolog (tomm-20), found in Caenorhabditis briggsae.